The following is a 1343-amino-acid chain: DNA-directed RNA polymerase subunit beta (1343 aa).

This sequence belongs to the RNA polymerase beta chain family. The RNAP catalytic core consists of 2 alpha, 1 beta, 1 beta' and 1 omega subunit. When a sigma factor is associated with the core the holoenzyme is formed, which can initiate transcription.

The catalysed reaction is RNA(n) + a ribonucleoside 5'-triphosphate = RNA(n+1) + diphosphate. DNA-dependent RNA polymerase catalyzes the transcription of DNA into RNA using the four ribonucleoside triphosphates as substrates. This Buchnera aphidicola subsp. Cinara cedri (strain Cc) protein is DNA-directed RNA polymerase subunit beta.